Reading from the N-terminus, the 465-residue chain is MILAIISLSVVICREVSDYIVMFDQDPSMDRASMKVLYNMNIHEAQNILRPDESIGIKMTNGFVARMSESTAERMKRHPSVKMVVKDSPVGISGLKFDVPGSDDRSGIVMQRHAPWGLARVGGSVSLVHGNYCYPINSGKGVDVYVLDTGVEIEHPEFGGRARWGANFVPKSPDRDEHGHGTHCAGVIGGKNFGVTKESSIIAVKVLDKYGSGMTSRLLQGVDFVIKEHEKKKDELYNAAADEYLSSGGSSDIEIEMDGSESFSFVQPETPSIQRLVDAISRKALQPKTVVNLSVGGFRNAALNFAIEYASRLGIHFSTAAGNEHEDACDFSPGSSRAAITTGASTYRDTVAFFSNFGKCVNVFAPGVDILSSWIGGTQKIVSGTSMAAPHTSGAIAAYLTYYDYDPHMLKSRIIGDARLIEDVSEDDYDGTTIWPLPSLFNANKKKLPILSMERLLRRVRNKMR.

An N-terminal signal peptide occupies residues Met-1–Ser-17. One can recognise an Inhibitor I9 domain in the interval Tyr-19–Val-90. The Peptidase S8 domain occupies Pro-115–Lys-447. Residues Asp-148 and His-180 each act as charge relay system in the active site. Cys-329 and Cys-360 are joined by a disulfide. Ser-386 serves as the catalytic Charge relay system.

This sequence belongs to the peptidase S8 family.

The protein resides in the secreted. Its subcellular location is the extracellular space. Functionally, may be involved in the degradation of proteins for nutrient acquisition or possess a regulatory function by proteolytic activation of proproteins. The sequence is that of Putative subtilisin-like proteinase 1 (SPL1) from Encephalitozoon cuniculi (strain GB-M1) (Microsporidian parasite).